A 373-amino-acid chain; its full sequence is Dual-specificity RNA methyltransferase RlmN (373 aa).

Residue E94 is the Proton acceptor of the active site. Positions 100–339 (EDDRATLCVS…VIVRKTRGDD (240 aa)) constitute a Radical SAM core domain. Residues C107 and C344 are joined by a disulfide bond. The [4Fe-4S] cluster site is built by C114, C118, and C121. S-adenosyl-L-methionine is bound by residues 168-169 (GE), S200, 222-224 (SIH), and N301. C344 serves as the catalytic S-methylcysteine intermediate.

The protein belongs to the radical SAM superfamily. RlmN family. It depends on [4Fe-4S] cluster as a cofactor.

The protein resides in the cytoplasm. It carries out the reaction adenosine(2503) in 23S rRNA + 2 reduced [2Fe-2S]-[ferredoxin] + 2 S-adenosyl-L-methionine = 2-methyladenosine(2503) in 23S rRNA + 5'-deoxyadenosine + L-methionine + 2 oxidized [2Fe-2S]-[ferredoxin] + S-adenosyl-L-homocysteine. The enzyme catalyses adenosine(37) in tRNA + 2 reduced [2Fe-2S]-[ferredoxin] + 2 S-adenosyl-L-methionine = 2-methyladenosine(37) in tRNA + 5'-deoxyadenosine + L-methionine + 2 oxidized [2Fe-2S]-[ferredoxin] + S-adenosyl-L-homocysteine. Specifically methylates position 2 of adenine 2503 in 23S rRNA and position 2 of adenine 37 in tRNAs. m2A2503 modification seems to play a crucial role in the proofreading step occurring at the peptidyl transferase center and thus would serve to optimize ribosomal fidelity. The chain is Dual-specificity RNA methyltransferase RlmN from Shewanella sp. (strain ANA-3).